Reading from the N-terminus, the 299-residue chain is MVTEEEVTAIGRTLLDAAQPLPARFRALFTLRNLGGPAAIDCIVRGFADSSALLKHELAFCLGQMRDRAAIPALLGVLQDSQQEPMVRHEAGEALGAIGDPEVLDVLRRYSEDPVVEVAETCQLAVRRLEWLQEHGEEPGSSPYRSVDPAPPAEETDVATLRAVLLDESRPLFDRYRAMFALRNLGGRDAVLALADGLRAGSALFRHEIGYVLGQMQDEACVPQLTAALRSRAENPMVRHECAEALGSIARPSCLETLRAFAQDEERVVRESCEVALDMYEYENGPQFQYADGLCRLQA.

HEAT-like PBS-type repeat units follow at residues 54-80 (LKHE…VLQD), 87-113 (VRHE…YSED), 174-200 (DRYR…GLRA), 205-231 (FRHE…ALRS), and 238-264 (VRHE…FAQD). Fe cation is bound by residues H56, H89, and E90. H207, H240, and E241 together coordinate Fe cation.

The protein belongs to the deoxyhypusine hydroxylase family. It depends on Fe(2+) as a cofactor.

It catalyses the reaction [eIF5A protein]-deoxyhypusine + AH2 + O2 = [eIF5A protein]-hypusine + A + H2O. It participates in protein modification; eIF5A hypusination. Functionally, catalyzes the hydroxylation of the N(6)-(4-aminobutyl)-L-lysine intermediate produced by deoxyhypusine synthase/DHPS on a critical lysine of the eukaryotic translation initiation factor 5A/eIF-5A. This is the second step of the post-translational modification of that lysine into an unusual amino acid residue named hypusine. Hypusination is unique to mature eIF-5A factor and is essential for its function. This Gallus gallus (Chicken) protein is Deoxyhypusine hydroxylase.